The following is a 556-amino-acid chain: 2-succinyl-5-enolpyruvyl-6-hydroxy-3-cyclohexene-1-carboxylate synthase (556 aa).

Belongs to the TPP enzyme family. MenD subfamily. As to quaternary structure, homodimer. The cofactor is Mg(2+). It depends on Mn(2+) as a cofactor. Thiamine diphosphate is required as a cofactor.

It carries out the reaction isochorismate + 2-oxoglutarate + H(+) = 5-enolpyruvoyl-6-hydroxy-2-succinyl-cyclohex-3-ene-1-carboxylate + CO2. It participates in quinol/quinone metabolism; 1,4-dihydroxy-2-naphthoate biosynthesis; 1,4-dihydroxy-2-naphthoate from chorismate: step 2/7. It functions in the pathway quinol/quinone metabolism; menaquinone biosynthesis. Functionally, catalyzes the thiamine diphosphate-dependent decarboxylation of 2-oxoglutarate and the subsequent addition of the resulting succinic semialdehyde-thiamine pyrophosphate anion to isochorismate to yield 2-succinyl-5-enolpyruvyl-6-hydroxy-3-cyclohexene-1-carboxylate (SEPHCHC). This is 2-succinyl-5-enolpyruvyl-6-hydroxy-3-cyclohexene-1-carboxylate synthase from Salmonella paratyphi C (strain RKS4594).